The primary structure comprises 45 residues: Putative potassium channel blocker (45 aa).

In terms of tissue distribution, expressed by the venom gland.

The protein resides in the secreted. In terms of biological role, inhibits potassium channels. This chain is Putative potassium channel blocker, found in Hottentotta tamulus (Eastern Indian scorpion).